The primary structure comprises 210 residues: Outer-membrane lipoprotein carrier protein (210 aa).

A signal peptide spans 1–26 (MHMIRRAAGALAVFAVAALAAAPAWA).

This sequence belongs to the LolA family. As to quaternary structure, monomer.

It localises to the periplasm. Participates in the translocation of lipoproteins from the inner membrane to the outer membrane. Only forms a complex with a lipoprotein if the residue after the N-terminal Cys is not an aspartate (The Asp acts as a targeting signal to indicate that the lipoprotein should stay in the inner membrane). The polypeptide is Outer-membrane lipoprotein carrier protein (Bordetella bronchiseptica (strain ATCC BAA-588 / NCTC 13252 / RB50) (Alcaligenes bronchisepticus)).